Reading from the N-terminus, the 201-residue chain is Probable GTP-binding protein EngB (201 aa).

The EngB-type G domain occupies 22-197; it reads RLPEYAFIGR…LDYIDSINQE (176 aa). GTP contacts are provided by residues 30-37, 57-61, 75-78, 142-145, and 173-178; these read GRSNVGKS, GKTQL, DLPG, TKAD, and VFITSS. Residues S37 and T59 each coordinate Mg(2+).

The protein belongs to the TRAFAC class TrmE-Era-EngA-EngB-Septin-like GTPase superfamily. EngB GTPase family. Mg(2+) serves as cofactor.

In terms of biological role, necessary for normal cell division and for the maintenance of normal septation. The protein is Probable GTP-binding protein EngB of Porphyromonas gingivalis (strain ATCC 33277 / DSM 20709 / CIP 103683 / JCM 12257 / NCTC 11834 / 2561).